Here is a 188-residue protein sequence, read N- to C-terminus: Elongation factor P (188 aa).

The protein belongs to the elongation factor P family.

The protein resides in the cytoplasm. It participates in protein biosynthesis; polypeptide chain elongation. In terms of biological role, involved in peptide bond synthesis. Stimulates efficient translation and peptide-bond synthesis on native or reconstituted 70S ribosomes in vitro. Probably functions indirectly by altering the affinity of the ribosome for aminoacyl-tRNA, thus increasing their reactivity as acceptors for peptidyl transferase. The sequence is that of Elongation factor P from Flavobacterium johnsoniae (strain ATCC 17061 / DSM 2064 / JCM 8514 / BCRC 14874 / CCUG 350202 / NBRC 14942 / NCIMB 11054 / UW101) (Cytophaga johnsonae).